A 301-amino-acid polypeptide reads, in one-letter code: Lipoyl synthase (301 aa).

[4Fe-4S] cluster-binding residues include cysteine 37, cysteine 42, cysteine 48, cysteine 63, cysteine 67, cysteine 70, and serine 276. The Radical SAM core domain maps to 49–265 (WSKKHATVMI…ERIARTKGFL (217 aa)).

This sequence belongs to the radical SAM superfamily. Lipoyl synthase family. [4Fe-4S] cluster serves as cofactor.

The protein resides in the cytoplasm. It carries out the reaction [[Fe-S] cluster scaffold protein carrying a second [4Fe-4S](2+) cluster] + N(6)-octanoyl-L-lysyl-[protein] + 2 oxidized [2Fe-2S]-[ferredoxin] + 2 S-adenosyl-L-methionine + 4 H(+) = [[Fe-S] cluster scaffold protein] + N(6)-[(R)-dihydrolipoyl]-L-lysyl-[protein] + 4 Fe(3+) + 2 hydrogen sulfide + 2 5'-deoxyadenosine + 2 L-methionine + 2 reduced [2Fe-2S]-[ferredoxin]. It functions in the pathway protein modification; protein lipoylation via endogenous pathway; protein N(6)-(lipoyl)lysine from octanoyl-[acyl-carrier-protein]: step 2/2. In terms of biological role, catalyzes the radical-mediated insertion of two sulfur atoms into the C-6 and C-8 positions of the octanoyl moiety bound to the lipoyl domains of lipoate-dependent enzymes, thereby converting the octanoylated domains into lipoylated derivatives. The sequence is that of Lipoyl synthase from Rickettsia felis (strain ATCC VR-1525 / URRWXCal2) (Rickettsia azadi).